A 473-amino-acid polypeptide reads, in one-letter code: MDYFPIFCQLQHKACLLVGGGEIAERKARLLLDAGALVTVNACEFTPQFHHWADQGQLSLISGEFVPELLADKWLVIAATDQLSVNALVYQSANQQRIFCNVVDDPKRTSFIMPSIIDRSPIMIAVSSGGKAPVLARLLREKLEALLPQHLGQLAQLAGNLRQRVKQHFAAMTERRRFWEKLLTHDRLAQSLANNDHVQADQHVEQLFSAPLTDRGEVVLVGAGPGDAGLLTLKGLQQIQQADVVVYDRLVSDEVMNLVRRDAERIFVGKQSGHHCVPQEQINQILLQQAQSGKRVVRLKGGDPFIFGRGGEELEELAGYGIPFSVVPGITAASGCSAYSGIPLTHRDHAQSVRLVTGHAKKEGQLDWANLAAEKQTLVFYMGLSQAGEIQQQLIQHGMPATTQVALVENGTSRHQRVVSGELSQLALLSQQVSSPSLIIVGSVVSLREKLNWFSSRHHDDQPKVTECVAHVG.

The tract at residues 1–204 (MDYFPIFCQL…NDHVQADQHV (204 aa)) is precorrin-2 dehydrogenase /sirohydrochlorin ferrochelatase. Residues 22-23 (EI) and 43-44 (CE) contribute to the NAD(+) site. A Phosphoserine modification is found at Ser-128. The interval 216 to 473 (GEVVLVGAGP…KVTECVAHVG (258 aa)) is uroporphyrinogen-III C-methyltransferase. Pro-225 provides a ligand contact to S-adenosyl-L-methionine. The Proton acceptor role is filled by Asp-248. The active-site Proton donor is Lys-270. S-adenosyl-L-methionine contacts are provided by residues 301–303 (GGD), Ile-306, 331–332 (TA), Met-382, and Gly-411.

The protein in the N-terminal section; belongs to the precorrin-2 dehydrogenase / sirohydrochlorin ferrochelatase family. In the C-terminal section; belongs to the precorrin methyltransferase family.

It catalyses the reaction uroporphyrinogen III + 2 S-adenosyl-L-methionine = precorrin-2 + 2 S-adenosyl-L-homocysteine + H(+). The catalysed reaction is precorrin-2 + NAD(+) = sirohydrochlorin + NADH + 2 H(+). It carries out the reaction siroheme + 2 H(+) = sirohydrochlorin + Fe(2+). Its pathway is cofactor biosynthesis; adenosylcobalamin biosynthesis; precorrin-2 from uroporphyrinogen III: step 1/1. It participates in cofactor biosynthesis; adenosylcobalamin biosynthesis; sirohydrochlorin from precorrin-2: step 1/1. It functions in the pathway porphyrin-containing compound metabolism; siroheme biosynthesis; precorrin-2 from uroporphyrinogen III: step 1/1. The protein operates within porphyrin-containing compound metabolism; siroheme biosynthesis; siroheme from sirohydrochlorin: step 1/1. Its pathway is porphyrin-containing compound metabolism; siroheme biosynthesis; sirohydrochlorin from precorrin-2: step 1/1. Multifunctional enzyme that catalyzes the SAM-dependent methylations of uroporphyrinogen III at position C-2 and C-7 to form precorrin-2 via precorrin-1. Then it catalyzes the NAD-dependent ring dehydrogenation of precorrin-2 to yield sirohydrochlorin. Finally, it catalyzes the ferrochelation of sirohydrochlorin to yield siroheme. The protein is Siroheme synthase 2 of Yersinia pseudotuberculosis serotype O:1b (strain IP 31758).